The sequence spans 252 residues: tRNA pseudouridine synthase A (252 aa).

The active-site Nucleophile is aspartate 51. A substrate-binding site is contributed by tyrosine 105.

This sequence belongs to the tRNA pseudouridine synthase TruA family.

It carries out the reaction uridine(38/39/40) in tRNA = pseudouridine(38/39/40) in tRNA. In terms of biological role, formation of pseudouridine at positions 38, 39 and 40 in the anticodon stem and loop of transfer RNAs. The polypeptide is tRNA pseudouridine synthase A (Thermoplasma acidophilum (strain ATCC 25905 / DSM 1728 / JCM 9062 / NBRC 15155 / AMRC-C165)).